A 159-amino-acid polypeptide reads, in one-letter code: Riboflavin kinase (159 aa).

Residue 38–43 (GLGEGR) coordinates CDP. Mg(2+)-binding residues include Thr-67 and Asn-69. Residues Thr-126 and Glu-134 each contribute to the FMN site. 139-142 (HKLR) lines the CDP pocket.

This sequence belongs to the archaeal riboflavin kinase family. Requires Mg(2+) as cofactor.

The enzyme catalyses riboflavin + CTP = CDP + FMN + H(+). It functions in the pathway cofactor biosynthesis; FMN biosynthesis; FMN from riboflavin (CTP route): step 1/1. Functionally, catalyzes the CTP-dependent phosphorylation of riboflavin (vitamin B2) to form flavin mononucleotide (FMN). This Sulfolobus acidocaldarius (strain ATCC 33909 / DSM 639 / JCM 8929 / NBRC 15157 / NCIMB 11770) protein is Riboflavin kinase.